A 207-amino-acid chain; its full sequence is Superoxide dismutase [Mn] (207 aa).

Positions 28, 76, 160, and 164 each coordinate Mn(2+).

It belongs to the iron/manganese superoxide dismutase family. The cofactor is Mn(2+).

It carries out the reaction 2 superoxide + 2 H(+) = H2O2 + O2. Its function is as follows. Destroys superoxide anion radicals which are normally produced within the cells and which are toxic to biological systems. This chain is Superoxide dismutase [Mn] (sodA), found in Mycobacterium avium.